Consider the following 149-residue polypeptide: Protein DOWN-REGULATED IN DIF1 11 (149 aa).

The signal sequence occupies residues 1–22 (MEKAILITFLIATTSMVYQTIG).

In terms of tissue distribution, mostly expressed in embryo sac cells. Restricted to synergid cells, especially in the filiform apparatus of mature female gametophyte, via MYB98-mediated transcription regulation. Also detected at low levels in egg and central cells.

The sequence is that of Protein DOWN-REGULATED IN DIF1 11 from Arabidopsis thaliana (Mouse-ear cress).